The sequence spans 504 residues: uncharacterized protein (504 aa).

The helical transmembrane segment at 6–26 (NLFIIFIFLFLLSQVSAYITF) threads the bilayer.

This sequence to M.jannaschii MJ1506 and MJ1561.

The protein resides in the membrane. This is an uncharacterized protein from Methanocaldococcus jannaschii (strain ATCC 43067 / DSM 2661 / JAL-1 / JCM 10045 / NBRC 100440) (Methanococcus jannaschii).